A 439-amino-acid polypeptide reads, in one-letter code: Putative porin QuiX (439 aa).

Positions 1–22 are cleaved as a signal peptide; it reads MRHFFKLGLVSAAVLGSQMTLA.

It belongs to the OprB family.

It localises to the cell outer membrane. Could be involved in the transport of quinate or shikimate. The protein is Putative porin QuiX (quiX) of Acinetobacter baylyi (strain ATCC 33305 / BD413 / ADP1).